Consider the following 39-residue polypeptide: Photosystem II reaction center protein J (39 aa).

Residues 9 to 29 traverse the membrane as a helical segment; the sequence is LWLVATVGGIAVITVLGIFIY.

Belongs to the PsbJ family. In terms of assembly, PSII is composed of 1 copy each of membrane proteins PsbA, PsbB, PsbC, PsbD, PsbE, PsbF, PsbH, PsbI, PsbJ, PsbK, PsbL, PsbM, PsbT, PsbX, PsbY, PsbZ, Psb30/Ycf12, at least 3 peripheral proteins of the oxygen-evolving complex and a large number of cofactors. It forms dimeric complexes.

The protein resides in the plastid. Its subcellular location is the chloroplast thylakoid membrane. One of the components of the core complex of photosystem II (PSII). PSII is a light-driven water:plastoquinone oxidoreductase that uses light energy to abstract electrons from H(2)O, generating O(2) and a proton gradient subsequently used for ATP formation. It consists of a core antenna complex that captures photons, and an electron transfer chain that converts photonic excitation into a charge separation. This chain is Photosystem II reaction center protein J, found in Gracilaria tenuistipitata var. liui (Red alga).